The following is a 281-amino-acid chain: Large ribosomal subunit protein uL2 (281 aa).

The interval 222-281 (TVRGSVMNPNDHPHGGGEGRTPIGRKSPVTPWGKKALGVKTRNTKKPSEKLIVRKRNAKK) is disordered.

Belongs to the universal ribosomal protein uL2 family. As to quaternary structure, part of the 50S ribosomal subunit. Forms a bridge to the 30S subunit in the 70S ribosome.

Functionally, one of the primary rRNA binding proteins. Required for association of the 30S and 50S subunits to form the 70S ribosome, for tRNA binding and peptide bond formation. It has been suggested to have peptidyltransferase activity; this is somewhat controversial. Makes several contacts with the 16S rRNA in the 70S ribosome. The protein is Large ribosomal subunit protein uL2 of Mesoplasma florum (strain ATCC 33453 / NBRC 100688 / NCTC 11704 / L1) (Acholeplasma florum).